A 469-amino-acid polypeptide reads, in one-letter code: UDP-N-acetylmuramate--L-alanine ligase (469 aa).

ATP is bound at residue 119–125 (GTHGKTT).

Belongs to the MurCDEF family.

The protein resides in the cytoplasm. It carries out the reaction UDP-N-acetyl-alpha-D-muramate + L-alanine + ATP = UDP-N-acetyl-alpha-D-muramoyl-L-alanine + ADP + phosphate + H(+). Its pathway is cell wall biogenesis; peptidoglycan biosynthesis. Functionally, cell wall formation. This Vesicomyosocius okutanii subsp. Calyptogena okutanii (strain HA) protein is UDP-N-acetylmuramate--L-alanine ligase.